Consider the following 700-residue polypeptide: Elongation factor G (700 aa).

Residues 10–286 (NKVRNIGIMA…AVIDYLPNPL (277 aa)) enclose the tr-type G domain. GTP is bound by residues 19–26 (AHIDAGKT), 83–87 (DTPGH), and 137–140 (NKMD).

This sequence belongs to the TRAFAC class translation factor GTPase superfamily. Classic translation factor GTPase family. EF-G/EF-2 subfamily.

Its subcellular location is the cytoplasm. Functionally, catalyzes the GTP-dependent ribosomal translocation step during translation elongation. During this step, the ribosome changes from the pre-translocational (PRE) to the post-translocational (POST) state as the newly formed A-site-bound peptidyl-tRNA and P-site-bound deacylated tRNA move to the P and E sites, respectively. Catalyzes the coordinated movement of the two tRNA molecules, the mRNA and conformational changes in the ribosome. The sequence is that of Elongation factor G from Rhodococcus jostii (strain RHA1).